Here is a 134-residue protein sequence, read N- to C-terminus: Fluoride-specific ion channel FluC 2 (134 aa).

4 helical membrane passes run methionine 1–glycine 21, isoleucine 28–methionine 48, glycine 68–phenylalanine 88, and leucine 92–leucine 112. The Na(+) site is built by glycine 71 and threonine 74.

Belongs to the fluoride channel Fluc/FEX (TC 1.A.43) family.

Its subcellular location is the cell membrane. It carries out the reaction fluoride(in) = fluoride(out). Na(+) is not transported, but it plays an essential structural role and its presence is essential for fluoride channel function. Functionally, fluoride-specific ion channel. Important for reducing fluoride concentration in the cell, thus reducing its toxicity. The chain is Fluoride-specific ion channel FluC 2 from Carboxydothermus hydrogenoformans (strain ATCC BAA-161 / DSM 6008 / Z-2901).